Here is a 98-residue protein sequence, read N- to C-terminus: MALTKAELAENLFDKLGFSKRDAKETVEVFFEEIRKALESGEQVKLSGFGNFDLRDKNERPGRNPKTGEDIPITARRVVTFRPGQKLKARVENLKKEQ.

A disordered region spans residues 51–71; it reads NFDLRDKNERPGRNPKTGEDI. The segment covering 53–69 has biased composition (basic and acidic residues); sequence DLRDKNERPGRNPKTGE.

It belongs to the bacterial histone-like protein family. Heterodimer of an alpha and a beta chain.

Functionally, this protein is one of the two subunits of integration host factor, a specific DNA-binding protein that functions in genetic recombination as well as in transcriptional and translational control. This chain is Integration host factor subunit alpha, found in Vibrio parahaemolyticus serotype O3:K6 (strain RIMD 2210633).